The primary structure comprises 368 residues: Glutamate 5-kinase (368 aa).

Lysine 15 contacts ATP. Serine 55, aspartate 143, and asparagine 155 together coordinate substrate. ATP is bound by residues 175-176 and 217-223; these read SD and SGGMVSK. One can recognise a PUA domain in the interval 277 to 354; sequence EGRLTIDAGA…DAQEAALGYA (78 aa).

It belongs to the glutamate 5-kinase family.

Its subcellular location is the cytoplasm. The enzyme catalyses L-glutamate + ATP = L-glutamyl 5-phosphate + ADP. The protein operates within amino-acid biosynthesis; L-proline biosynthesis; L-glutamate 5-semialdehyde from L-glutamate: step 1/2. Catalyzes the transfer of a phosphate group to glutamate to form L-glutamate 5-phosphate. The sequence is that of Glutamate 5-kinase from Sphingopyxis alaskensis (strain DSM 13593 / LMG 18877 / RB2256) (Sphingomonas alaskensis).